Consider the following 310-residue polypeptide: p-hydroxybenzoic acid efflux pump subunit AaeA (310 aa).

The chain crosses the membrane as a helical span at residues 12-32 (AITVVLVILAFIAIFNAWVYY).

This sequence belongs to the membrane fusion protein (MFP) (TC 8.A.1) family.

It localises to the cell inner membrane. Forms an efflux pump with AaeB. This is p-hydroxybenzoic acid efflux pump subunit AaeA from Escherichia coli O139:H28 (strain E24377A / ETEC).